The following is a 134-amino-acid chain: Large ribosomal subunit protein uL18 (134 aa).

The protein belongs to the universal ribosomal protein uL18 family. As to quaternary structure, part of the 50S ribosomal subunit; part of the 5S rRNA/L5/L18/L25 subcomplex. Contacts the 5S and 23S rRNAs.

Its function is as follows. This is one of the proteins that bind and probably mediate the attachment of the 5S RNA into the large ribosomal subunit, where it forms part of the central protuberance. The sequence is that of Large ribosomal subunit protein uL18 from Corynebacterium glutamicum (strain ATCC 13032 / DSM 20300 / JCM 1318 / BCRC 11384 / CCUG 27702 / LMG 3730 / NBRC 12168 / NCIMB 10025 / NRRL B-2784 / 534).